A 117-amino-acid chain; its full sequence is Large ribosomal subunit protein bL20 (117 aa).

The protein belongs to the bacterial ribosomal protein bL20 family.

In terms of biological role, binds directly to 23S ribosomal RNA and is necessary for the in vitro assembly process of the 50S ribosomal subunit. It is not involved in the protein synthesizing functions of that subunit. In Acetivibrio thermocellus (strain ATCC 27405 / DSM 1237 / JCM 9322 / NBRC 103400 / NCIMB 10682 / NRRL B-4536 / VPI 7372) (Clostridium thermocellum), this protein is Large ribosomal subunit protein bL20.